The chain runs to 380 residues: Cytochrome b (380 aa).

The next 4 helical transmembrane spans lie at 34 to 54, 78 to 99, 114 to 134, and 179 to 199; these read FGSLLGICLMTQILTGLLLAT, WLIRNLHANGASFFFICIYLHI, WNTGVILLLTLMATAFVGYVL, and FFALHFLLPFMIAGLTTIHLT. Heme b contacts are provided by histidine 84 and histidine 98. The heme b site is built by histidine 183 and histidine 197. Histidine 202 provides a ligand contact to a ubiquinone. A run of 4 helical transmembrane segments spans residues 227-247, 289-309, 321-341, and 348-368; these read LKDILGFTLMLLPLTILALFS, LGGVLALAASVLILFLTPFLH, ISQLLFWILVTNLLILTWVGS, and FIIIGQLASITYFTILLILFP.

The protein belongs to the cytochrome b family. The cytochrome bc1 complex contains 11 subunits: 3 respiratory subunits (MT-CYB, CYC1 and UQCRFS1), 2 core proteins (UQCRC1 and UQCRC2) and 6 low-molecular weight proteins (UQCRH/QCR6, UQCRB/QCR7, UQCRQ/QCR8, UQCR10/QCR9, UQCR11/QCR10 and a cleavage product of UQCRFS1). This cytochrome bc1 complex then forms a dimer. Heme b serves as cofactor.

Its subcellular location is the mitochondrion inner membrane. In terms of biological role, component of the ubiquinol-cytochrome c reductase complex (complex III or cytochrome b-c1 complex) that is part of the mitochondrial respiratory chain. The b-c1 complex mediates electron transfer from ubiquinol to cytochrome c. Contributes to the generation of a proton gradient across the mitochondrial membrane that is then used for ATP synthesis. This Pelecanoides magellani (Magellanic diving petrel) protein is Cytochrome b (MT-CYB).